A 287-amino-acid polypeptide reads, in one-letter code: Oxaloacetate decarboxylase (287 aa).

Ser-50 lines the substrate pocket. Asp-88 provides a ligand contact to Mg(2+). Residues Arg-159 and His-235 each coordinate substrate.

Belongs to the isocitrate lyase family. Oxaloacetate decarboxylase subfamily. In terms of assembly, homotetramer; dimer of dimers. Mg(2+) serves as cofactor.

The catalysed reaction is oxaloacetate + H(+) = pyruvate + CO2. Functionally, catalyzes the decarboxylation of oxaloacetate into pyruvate. Seems to play a role in maintaining cellular concentrations of bicarbonate and pyruvate. This is Oxaloacetate decarboxylase from Pseudomonas aeruginosa (strain LESB58).